Reading from the N-terminus, the 243-residue chain is Type III pantothenate kinase (243 aa).

6 to 13 lines the ATP pocket; sequence DIGNTVAK. Substrate contacts are provided by residues tyrosine 86 and 93–96; that span reads GYDR. Residue aspartate 95 is the Proton acceptor of the active site. A K(+)-binding site is contributed by aspartate 116. Threonine 119 is a binding site for ATP. Threonine 171 lines the substrate pocket.

It belongs to the type III pantothenate kinase family. As to quaternary structure, homodimer. NH4(+) is required as a cofactor. K(+) serves as cofactor.

The protein localises to the cytoplasm. It carries out the reaction (R)-pantothenate + ATP = (R)-4'-phosphopantothenate + ADP + H(+). It participates in cofactor biosynthesis; coenzyme A biosynthesis; CoA from (R)-pantothenate: step 1/5. Its function is as follows. Catalyzes the phosphorylation of pantothenate (Pan), the first step in CoA biosynthesis. This is Type III pantothenate kinase from Bacteroides fragilis (strain YCH46).